The chain runs to 101 residues: Interleukin-8 (101 aa).

Positions 1 to 22 (MTSKLAVALLAAFLLSAALCEA) are cleaved as a signal peptide. Arg27 bears the Citrulline mark. Cystine bridges form between Cys34–Cys61 and Cys36–Cys77.

This sequence belongs to the intercrine alpha (chemokine CxC) family. Homodimer. Interacts with TNFAIP6 (via Link domain); this interaction interferes with chemokine binding to glycosaminoglycans. In terms of processing, citrullination at Arg-27 prevents proteolysis, and dampens tissue inflammation, it also enhances leukocytosis, possibly through impaired chemokine clearance from the blood circulation.

It localises to the secreted. In terms of biological role, chemotactic factor that mediates inflammatory response by attracting neutrophils, basophils, and T-cells to clear pathogens and protect the host from infection. Also plays an important role in neutrophil activation. Released in response to an inflammatory stimulus, exerts its effect by binding to the G-protein-coupled receptors CXCR1 and CXCR2, primarily found in neutrophils, monocytes and endothelial cells. G-protein heterotrimer (alpha, beta, gamma subunits) constitutively binds to CXCR1/CXCR2 receptor and activation by IL8 leads to beta and gamma subunits release from Galpha (GNAI2 in neutrophils) and activation of several downstream signaling pathways including PI3K and MAPK pathways. The sequence is that of Interleukin-8 (CXCL8) from Ovis aries (Sheep).